A 1909-amino-acid chain; its full sequence is NFX1-type zinc finger-containing protein 1 (1909 aa).

Composition is skewed to basic and acidic residues over residues M1 to P12 and R76 to S107. Disordered regions lie at residues M1–Q133 and T787–G813. Over residues S113–T122 the composition is skewed to polar residues. Acidic residues predominate over residues E802 to G813. The stretch at R939–D964 forms a coiled coil. 4 NF-X1-type zinc fingers span residues C1291–K1313, C1375–E1393, C1433–Q1455, and C1463–R1480. Positions L1733–R1764 form a coiled coil. An RZ-type zinc finger spans residues I1818 to H1889. Zn(2+) is bound by residues C1840, H1844, C1860, and C1863.

The protein belongs to the ZNFX1 family. Interacts with MAVS.

Its subcellular location is the mitochondrion outer membrane. It localises to the cytoplasm. It is found in the stress granule. RNA-binding protein that initiates the antiviral response and is required to restrict the replication of RNA viruses. Acts as a double-stranded RNA (dsRNA) sensor that recognizes viral RNA and then interacts with MAVS to initiate the type I interferon response. Also required for immunity against some bacteria, such as mycobacteria. This Mus musculus (Mouse) protein is NFX1-type zinc finger-containing protein 1.